A 517-amino-acid chain; its full sequence is Crotonobetaine/carnitine--CoA ligase (517 aa).

Belongs to the ATP-dependent AMP-binding enzyme family.

The enzyme catalyses 4-(trimethylamino)butanoate + ATP + CoA = 4-(trimethylamino)butanoyl-CoA + AMP + diphosphate. The catalysed reaction is crotonobetaine + ATP + CoA = crotonobetainyl-CoA + AMP + diphosphate. It carries out the reaction (R)-carnitine + ATP + CoA = (R)-carnitinyl-CoA + AMP + diphosphate. Its pathway is amine and polyamine metabolism; carnitine metabolism. Its function is as follows. Catalyzes the transfer of CoA to carnitine, generating the initial carnitinyl-CoA needed for the CaiB reaction cycle. Also has activity toward crotonobetaine and gamma-butyrobetaine. The chain is Crotonobetaine/carnitine--CoA ligase from Citrobacter koseri (strain ATCC BAA-895 / CDC 4225-83 / SGSC4696).